The sequence spans 652 residues: DNA ligase (652 aa).

NAD(+) is bound by residues 29–33 (DSDYD), 78–79 (SL), and E107. K109 serves as the catalytic N6-AMP-lysine intermediate. NAD(+) contacts are provided by R130, E164, K278, and K302. Positions 395, 398, 413, and 418 each coordinate Zn(2+). One can recognise a BRCT domain in the interval 577–652 (NSDAALFGLT…IEDEDWLRKF (76 aa)).

Belongs to the NAD-dependent DNA ligase family. LigA subfamily. Requires Mg(2+) as cofactor. The cofactor is Mn(2+).

It catalyses the reaction NAD(+) + (deoxyribonucleotide)n-3'-hydroxyl + 5'-phospho-(deoxyribonucleotide)m = (deoxyribonucleotide)n+m + AMP + beta-nicotinamide D-nucleotide.. In terms of biological role, DNA ligase that catalyzes the formation of phosphodiester linkages between 5'-phosphoryl and 3'-hydroxyl groups in double-stranded DNA using NAD as a coenzyme and as the energy source for the reaction. It is essential for DNA replication and repair of damaged DNA. This chain is DNA ligase, found in Streptococcus pyogenes serotype M6 (strain ATCC BAA-946 / MGAS10394).